We begin with the raw amino-acid sequence, 297 residues long: Acetyl-coenzyme A carboxylase carboxyl transferase subunit beta (297 aa).

The region spanning 25 to 294 (LWVKCPETGQ…VPPKGRLPAP (270 aa)) is the CoA carboxyltransferase N-terminal domain.

This sequence belongs to the AccD/PCCB family. As to quaternary structure, acetyl-CoA carboxylase is a heterohexamer composed of biotin carboxyl carrier protein (AccB), biotin carboxylase (AccC) and two subunits each of ACCase subunit alpha (AccA) and ACCase subunit beta (AccD).

It localises to the cytoplasm. It carries out the reaction N(6)-carboxybiotinyl-L-lysyl-[protein] + acetyl-CoA = N(6)-biotinyl-L-lysyl-[protein] + malonyl-CoA. The protein operates within lipid metabolism; malonyl-CoA biosynthesis; malonyl-CoA from acetyl-CoA: step 1/1. In terms of biological role, component of the acetyl coenzyme A carboxylase (ACC) complex. Biotin carboxylase (BC) catalyzes the carboxylation of biotin on its carrier protein (BCCP) and then the CO(2) group is transferred by the transcarboxylase to acetyl-CoA to form malonyl-CoA. The protein is Acetyl-coenzyme A carboxylase carboxyl transferase subunit beta of Azorhizobium caulinodans (strain ATCC 43989 / DSM 5975 / JCM 20966 / LMG 6465 / NBRC 14845 / NCIMB 13405 / ORS 571).